A 395-amino-acid chain; its full sequence is Formate-dependent phosphoribosylglycinamide formyltransferase (395 aa).

Residues 22 to 23 (EL) and E82 contribute to the N(1)-(5-phospho-beta-D-ribosyl)glycinamide site. Residues R115, K156, 161 to 166 (SSGKGQ), 196 to 199 (EGFI), and E204 each bind ATP. Positions 120 to 309 (RLAAETLGLP…EFALHARAIL (190 aa)) constitute an ATP-grasp domain. The Mg(2+) site is built by E268 and E280. N(1)-(5-phospho-beta-D-ribosyl)glycinamide-binding positions include D287, K356, and 363-364 (RR).

This sequence belongs to the PurK/PurT family. Homodimer.

It carries out the reaction N(1)-(5-phospho-beta-D-ribosyl)glycinamide + formate + ATP = N(2)-formyl-N(1)-(5-phospho-beta-D-ribosyl)glycinamide + ADP + phosphate + H(+). It functions in the pathway purine metabolism; IMP biosynthesis via de novo pathway; N(2)-formyl-N(1)-(5-phospho-D-ribosyl)glycinamide from N(1)-(5-phospho-D-ribosyl)glycinamide (formate route): step 1/1. Functionally, involved in the de novo purine biosynthesis. Catalyzes the transfer of formate to 5-phospho-ribosyl-glycinamide (GAR), producing 5-phospho-ribosyl-N-formylglycinamide (FGAR). Formate is provided by PurU via hydrolysis of 10-formyl-tetrahydrofolate. The sequence is that of Formate-dependent phosphoribosylglycinamide formyltransferase from Stenotrophomonas maltophilia (strain K279a).